The primary structure comprises 62 residues: UPF0337 protein gsr0040 (62 aa).

Basic and acidic residues-rich tracts occupy residues 1–15 and 27–62; these read MGID…KDVQ and DDPK…IDNV. Residues 1-62 are disordered; the sequence is MGIDKRAEAT…DQAHRTIDNV (62 aa).

Belongs to the UPF0337 (CsbD) family.

In Gloeobacter violaceus (strain ATCC 29082 / PCC 7421), this protein is UPF0337 protein gsr0040.